We begin with the raw amino-acid sequence, 611 residues long: Chaperone protein HtpG (611 aa).

The tract at residues 1–326 (MSETLERHAF…TEDLPLNVSR (326 aa)) is a; substrate-binding. The b stretch occupies residues 327–536 (EMLQATPVLA…SGGPDLQMQR (210 aa)). The interval 537-611 (LLRRAGRGFG…RVAAALAAQA (75 aa)) is c.

The protein belongs to the heat shock protein 90 family. As to quaternary structure, homodimer.

The protein resides in the cytoplasm. Molecular chaperone. Has ATPase activity. This Methylobacterium sp. (strain 4-46) protein is Chaperone protein HtpG.